The following is a 90-amino-acid chain: ImmF control region 10 kDa protein (90 aa).

The 55-residue stretch at 11 to 65 (IKDKRKEKHLKQTEMAKALGMSRTYLSDIENGRYLPSTKTLSRIAILINLDLNVL) folds into the HTH cro/C1-type domain. The H-T-H motif DNA-binding region spans 22 to 41 (QTEMAKALGMSRTYLSDIEN).

The polypeptide is ImmF control region 10 kDa protein (Bacillus phage phi105 (Bacteriophage phi-105)).